We begin with the raw amino-acid sequence, 267 residues long: Hydroxyethylthiazole kinase (267 aa).

Residue M46 coordinates substrate. Positions 121 and 167 each coordinate ATP. Residue A194 coordinates substrate.

The protein belongs to the Thz kinase family. The cofactor is Mg(2+).

The enzyme catalyses 5-(2-hydroxyethyl)-4-methylthiazole + ATP = 4-methyl-5-(2-phosphooxyethyl)-thiazole + ADP + H(+). The protein operates within cofactor biosynthesis; thiamine diphosphate biosynthesis; 4-methyl-5-(2-phosphoethyl)-thiazole from 5-(2-hydroxyethyl)-4-methylthiazole: step 1/1. Catalyzes the phosphorylation of the hydroxyl group of 4-methyl-5-beta-hydroxyethylthiazole (THZ). This is Hydroxyethylthiazole kinase from Rhizobium johnstonii (strain DSM 114642 / LMG 32736 / 3841) (Rhizobium leguminosarum bv. viciae).